The chain runs to 187 residues: uncharacterized protein (187 aa).

This sequence belongs to the isochorismatase family.

This is an uncharacterized protein from Bacillus subtilis (strain 168).